Consider the following 251-residue polypeptide: Elongator complex protein 6 (251 aa).

This sequence belongs to the ELP6 family. As to quaternary structure, component of the elongator complex composed of Elp1, Elp2, Elp3, Elp4, Elp5 and Elp6. The elongator complex associates with and stabilizes microtubules; efficient interaction requires the full complex. Interacts with InR/Insulin-like receptor; the interaction may stabilize Elp6.

It is found in the cytoplasm. The protein resides in the nucleus. The protein localises to the cytoskeleton. Its subcellular location is the spindle. It participates in tRNA modification; 5-methoxycarbonylmethyl-2-thiouridine-tRNA biosynthesis. In terms of biological role, component of the elongator complex, which is required for multiple tRNA modifications, including mcm5U (5-methoxycarbonylmethyl uridine), mcm5s2U (5-methoxycarbonylmethyl-2-thiouridine), and ncm5U (5-carbamoylmethyl uridine). The elongator complex catalyzes formation of carboxymethyluridine in the wobble base at position 34 in tRNAs. Binding by the elongator complex stabilizes microtubules and promotes their growth. This induces central spindle asymmetry, promoting polarized signaling endosome trafficking during asymmetric cell division and cell fate assignation of sensory organ precursor cells. Required in germ line cells for microtubule organization involved in oocyte polarization and chromosome organization. Involved in InR-TOR (insulin-like receptor-target of rapamycin) signaling regulation of cellular metabolism, autophagy and apoptosis. The protein is Elongator complex protein 6 of Drosophila melanogaster (Fruit fly).